A 292-amino-acid chain; its full sequence is NAD kinase (292 aa).

Asp-73 acts as the Proton acceptor in catalysis. NAD(+)-binding positions include 73–74 (DG), 147–148 (NE), His-158, Arg-175, Asp-177, 188–193 (TAYSLS), and Gln-247.

It belongs to the NAD kinase family. It depends on a divalent metal cation as a cofactor.

Its subcellular location is the cytoplasm. The catalysed reaction is NAD(+) + ATP = ADP + NADP(+) + H(+). In terms of biological role, involved in the regulation of the intracellular balance of NAD and NADP, and is a key enzyme in the biosynthesis of NADP. Catalyzes specifically the phosphorylation on 2'-hydroxyl of the adenosine moiety of NAD to yield NADP. The polypeptide is NAD kinase (Escherichia coli O157:H7).